The chain runs to 255 residues: Small ribosomal subunit protein eS1 (255 aa).

Residues 1–18 (MAVGKNKRLSKGKKGLKK) are compositionally biased toward basic residues. Residues 1-28 (MAVGKNKRLSKGKKGLKKRTQDPFSRKD) form a disordered region. A2 carries the post-translational modification N-acetylalanine; partial. Positions 19–28 (RTQDPFSRKD) are enriched in basic and acidic residues.

The protein belongs to the eukaryotic ribosomal protein eS1 family. Component of the small ribosomal subunit. Mature ribosomes consist of a small (40S) and a large (60S) subunit. The 40S subunit contains about 33 different proteins and 1 molecule of RNA (18S). The 60S subunit contains about 49 different proteins and 3 molecules of RNA (25S, 5.8S and 5S).

It is found in the cytoplasm. This Ajellomyces dermatitidis (strain ER-3 / ATCC MYA-2586) (Blastomyces dermatitidis) protein is Small ribosomal subunit protein eS1.